Here is a 317-residue protein sequence, read N- to C-terminus: Melanocyte-stimulating hormone receptor (317 aa).

The Extracellular portion of the chain corresponds to methionine 1–glutamate 37. N-linked (GlcNAc...) asparagine glycosylation occurs at asparagine 29. A helical transmembrane segment spans residues valine 38 to isoleucine 63. Residues alanine 64 to proline 72 are Cytoplasmic-facing. Residues methionine 73 to leucine 93 traverse the membrane as a helical segment. Topologically, residues glutamate 94 to asparagine 118 are extracellular. The chain crosses the membrane as a helical span at residues threonine 119–leucine 140. Residues aspartate 141–arginine 163 are Cytoplasmic-facing. A helical transmembrane segment spans residues alanine 164 to cysteine 183. At aspartate 184–cysteine 191 the chain is on the extracellular side. Residues leucine 192 to leucine 211 traverse the membrane as a helical segment. Over alanine 212–alanine 240 the chain is Cytoplasmic. The helical transmembrane segment at alanine 241–leucine 266 threads the bilayer. Topologically, residues cysteine 267–asparagine 279 are extracellular. The chain crosses the membrane as a helical span at residues phenylalanine 280–phenylalanine 300. Residues arginine 301–tryptophan 317 lie on the Cytoplasmic side of the membrane. A lipid anchor (S-palmitoyl cysteine) is attached at cysteine 315.

Belongs to the G-protein coupled receptor 1 family. In terms of assembly, interacts with MGRN1, but does not undergo MGRN1-mediated ubiquitination; this interaction competes with GNAS-binding and thus inhibits agonist-induced cAMP production. Interacts with OPN3; the interaction results in a decrease in MC1R-mediated cAMP signaling and ultimately a decrease in melanin production in melanocytes.

It is found in the cell membrane. Receptor for MSH (alpha, beta and gamma) and ACTH. The activity of this receptor is mediated by G proteins which activate adenylate cyclase. Mediates melanogenesis, the production of eumelanin (black/brown) and phaeomelanin (red/yellow), via regulation of cAMP signaling in melanocytes. The polypeptide is Melanocyte-stimulating hormone receptor (MC1R) (Alouatta seniculus (Red howler monkey)).